Here is a 244-residue protein sequence, read N- to C-terminus: tRNA uridine(34) hydroxylase (244 aa).

In terms of domain architecture, Rhodanese spans 129–219; sequence QGRELVMLDT…GILKYFEETD (91 aa). The active-site Cysteine persulfide intermediate is Cys183.

The protein belongs to the TrhO family.

The enzyme catalyses uridine(34) in tRNA + AH2 + O2 = 5-hydroxyuridine(34) in tRNA + A + H2O. In terms of biological role, catalyzes oxygen-dependent 5-hydroxyuridine (ho5U) modification at position 34 in tRNAs. The protein is tRNA uridine(34) hydroxylase of Bordetella bronchiseptica (strain ATCC BAA-588 / NCTC 13252 / RB50) (Alcaligenes bronchisepticus).